Consider the following 620-residue polypeptide: Putative ribonuclease H protein At1g65750 (620 aa).

Residues 456–586 (CVGWVKVNTD…ADGLANYAFS (131 aa)) form the RNase H type-1 domain. Asp-465, Glu-505, Asp-529, and Asp-578 together coordinate Mg(2+).

It depends on Mg(2+) as a cofactor.

It catalyses the reaction Endonucleolytic cleavage to 5'-phosphomonoester.. The polypeptide is Putative ribonuclease H protein At1g65750 (Arabidopsis thaliana (Mouse-ear cress)).